Reading from the N-terminus, the 178-residue chain is ATP synthase subunit delta (178 aa).

Belongs to the ATPase delta chain family. F-type ATPases have 2 components, F(1) - the catalytic core - and F(0) - the membrane proton channel. F(1) has five subunits: alpha(3), beta(3), gamma(1), delta(1), epsilon(1). F(0) has three main subunits: a(1), b(2) and c(10-14). The alpha and beta chains form an alternating ring which encloses part of the gamma chain. F(1) is attached to F(0) by a central stalk formed by the gamma and epsilon chains, while a peripheral stalk is formed by the delta and b chains.

It localises to the cell inner membrane. Functionally, f(1)F(0) ATP synthase produces ATP from ADP in the presence of a proton or sodium gradient. F-type ATPases consist of two structural domains, F(1) containing the extramembraneous catalytic core and F(0) containing the membrane proton channel, linked together by a central stalk and a peripheral stalk. During catalysis, ATP synthesis in the catalytic domain of F(1) is coupled via a rotary mechanism of the central stalk subunits to proton translocation. Its function is as follows. This protein is part of the stalk that links CF(0) to CF(1). It either transmits conformational changes from CF(0) to CF(1) or is implicated in proton conduction. In Azotobacter vinelandii (strain DJ / ATCC BAA-1303), this protein is ATP synthase subunit delta.